Consider the following 94-residue polypeptide: Integration host factor subunit beta (94 aa).

The protein belongs to the bacterial histone-like protein family. In terms of assembly, heterodimer of an alpha and a beta chain.

Its function is as follows. This protein is one of the two subunits of integration host factor, a specific DNA-binding protein that functions in genetic recombination as well as in transcriptional and translational control. The polypeptide is Integration host factor subunit beta (Pseudomonas paraeruginosa (strain DSM 24068 / PA7) (Pseudomonas aeruginosa (strain PA7))).